The following is a 302-amino-acid chain: MKRDVLSITDLSKEEIYELLESAADLKAKRKAGESTEYLKNKSLGMIFEKSSTRTRVSFEVAMTDFGGHALYLNSRDIQVGRGETIEDTARTLSGYLHGLMARVMSHDTVEKLAKYSTMPVINALSDREHPCQILGDFMTIMEFKKKFEGLKFAWVGDGNNVCNSALLGSAIMGMEFAVACPKGYEPKAEFLEQAKALGGKFTITDDPKVAAKDADIIYTDVWVSMGDEAEQEKRLREFASFQVNTELLGVAKPDVIVMHCLPARRGLEITDEVMDGPNSVIFEEAENRLHAQKALILKLMR.

Residues 52–55 (STRT), Gln-79, Arg-103, and 130–133 (HPCQ) contribute to the carbamoyl phosphate site. L-ornithine is bound by residues Asn-161, Asp-221, and 225 to 226 (SM). Residues 261–262 (CL) and Arg-289 each bind carbamoyl phosphate.

It belongs to the aspartate/ornithine carbamoyltransferase superfamily. OTCase family.

The protein resides in the cytoplasm. It carries out the reaction carbamoyl phosphate + L-ornithine = L-citrulline + phosphate + H(+). It participates in amino-acid biosynthesis; L-arginine biosynthesis; L-arginine from L-ornithine and carbamoyl phosphate: step 1/3. Its function is as follows. Reversibly catalyzes the transfer of the carbamoyl group from carbamoyl phosphate (CP) to the N(epsilon) atom of ornithine (ORN) to produce L-citrulline. The polypeptide is Ornithine carbamoyltransferase (Methanosarcina acetivorans (strain ATCC 35395 / DSM 2834 / JCM 12185 / C2A)).